The sequence spans 226 residues: UPF0758 protein PsycPRwf_0491 (226 aa).

One can recognise an MPN domain in the interval 102–224 (SLNRSQVVKD…TLSFAETATA (123 aa)). Zn(2+) contacts are provided by His-173, His-175, and Asp-186. Residues 173–186 (HNHPNQDATPSAAD) carry the JAMM motif motif.

It belongs to the UPF0758 family.

This Psychrobacter sp. (strain PRwf-1) protein is UPF0758 protein PsycPRwf_0491.